The sequence spans 538 residues: Small ribosomal subunit protein uS3m (538 aa).

A disordered region spans residues S111–I134. Positions N120 to I134 are enriched in basic and acidic residues.

It belongs to the universal ribosomal protein uS3 family.

It localises to the mitochondrion. The chain is Small ribosomal subunit protein uS3m (RPS3) from Oryza sativa subsp. japonica (Rice).